The sequence spans 463 residues: Elongation factor 1-alpha (463 aa).

Positions 8–245 (KTHLNIVIIG…DALVPPVRPA (238 aa)) constitute a tr-type G domain. Positions 17-24 (GHVDSGKS) are G1. A GTP-binding site is contributed by 17 to 24 (GHVDSGKS). Residues 73 to 77 (GITID) are G2. A G3 region spans residues 94 to 97 (DAPG). GTP is bound by residues 94–98 (DAPGH) and 156–159 (NKMD). The G4 stretch occupies residues 156–159 (NKMD). The interval 197-199 (SGW) is G5.

The protein belongs to the TRAFAC class translation factor GTPase superfamily. Classic translation factor GTPase family. EF-Tu/EF-1A subfamily. In terms of assembly, the 42S RNP particle comprises four subunits each of which contains one molecule of 5S RNA, three molecules of tRNA, two molecules of EF1-alpha and one molecule of the 5S RNA binding protein 43.

It localises to the cytoplasm. Its function is as follows. This protein is one of two protein components of a 42S RNP particle that is very abundant in previtellogenic oocytes. A major function served by 42sp50 appears to be the storage of tRNAs for later use in oogenesis and early embryogenesis. Purified 42S particles can directly transfer aminoacyl tRNA to ribosomes. This Xenopus laevis (African clawed frog) protein is Elongation factor 1-alpha.